The chain runs to 438 residues: UDP-N-acetylmuramoylalanine--D-glutamate ligase (438 aa).

Residue Gly-112–Thr-118 coordinates ATP.

Belongs to the MurCDEF family.

It is found in the cytoplasm. The enzyme catalyses UDP-N-acetyl-alpha-D-muramoyl-L-alanine + D-glutamate + ATP = UDP-N-acetyl-alpha-D-muramoyl-L-alanyl-D-glutamate + ADP + phosphate + H(+). The protein operates within cell wall biogenesis; peptidoglycan biosynthesis. In terms of biological role, cell wall formation. Catalyzes the addition of glutamate to the nucleotide precursor UDP-N-acetylmuramoyl-L-alanine (UMA). This chain is UDP-N-acetylmuramoylalanine--D-glutamate ligase, found in Pectobacterium atrosepticum (strain SCRI 1043 / ATCC BAA-672) (Erwinia carotovora subsp. atroseptica).